The following is a 1479-amino-acid chain: Chromosome partition protein MukB (1479 aa).

ATP is bound at residue 34 to 41 (GGNGAGKS). Coiled coils occupy residues 337–418 (LNLV…QYQQ), 511–603 (QAER…RAPV), 780–810 (RAAR…DVQK), 847–1116 (ELDR…AKAG), and 1206–1265 (DDPV…LQAV). The tract at residues 666 to 783 (PGGSEDPRLN…EVPLFGRAAR (118 aa)) is flexible hinge.

It belongs to the SMC family. MukB subfamily. Homodimerization via its hinge domain. Binds to DNA via its C-terminal region. Interacts, and probably forms a ternary complex, with MukE and MukF via its C-terminal region. The complex formation is stimulated by calcium or magnesium. Interacts with tubulin-related protein FtsZ.

Its subcellular location is the cytoplasm. The protein localises to the nucleoid. In terms of biological role, plays a central role in chromosome condensation, segregation and cell cycle progression. Functions as a homodimer, which is essential for chromosome partition. Involved in negative DNA supercoiling in vivo, and by this means organize and compact chromosomes. May achieve or facilitate chromosome segregation by condensation DNA from both sides of a centrally located replisome during cell division. In Pectobacterium carotovorum subsp. carotovorum (strain PC1), this protein is Chromosome partition protein MukB.